Reading from the N-terminus, the 353-residue chain is Protein RecA (353 aa).

Residue 67–74 (GPESSGKT) coordinates ATP.

Belongs to the RecA family.

The protein resides in the cytoplasm. In terms of biological role, can catalyze the hydrolysis of ATP in the presence of single-stranded DNA, the ATP-dependent uptake of single-stranded DNA by duplex DNA, and the ATP-dependent hybridization of homologous single-stranded DNAs. It interacts with LexA causing its activation and leading to its autocatalytic cleavage. The polypeptide is Protein RecA (Shewanella sediminis (strain HAW-EB3)).